A 143-amino-acid chain; its full sequence is Large ribosomal subunit protein uL13 (143 aa).

This sequence belongs to the universal ribosomal protein uL13 family. As to quaternary structure, part of the 50S ribosomal subunit.

This protein is one of the early assembly proteins of the 50S ribosomal subunit, although it is not seen to bind rRNA by itself. It is important during the early stages of 50S assembly. In Desulfitobacterium hafniense (strain DSM 10664 / DCB-2), this protein is Large ribosomal subunit protein uL13.